We begin with the raw amino-acid sequence, 547 residues long: GMP synthase [glutamine-hydrolyzing] (547 aa).

The Glutamine amidotransferase type-1 domain maps to 12-210 (KVLILDFGSQ…VLEIAGAKPD (199 aa)). Residue Cys-89 is the Nucleophile of the active site. Catalysis depends on residues His-184 and Glu-186. One can recognise a GMPS ATP-PPase domain in the interval 211-403 (WIMRDHIEEA…LGLPPEMVYR (193 aa)). An ATP-binding site is contributed by 238 to 244 (SGGVDSS).

As to quaternary structure, homodimer.

It carries out the reaction XMP + L-glutamine + ATP + H2O = GMP + L-glutamate + AMP + diphosphate + 2 H(+). It participates in purine metabolism; GMP biosynthesis; GMP from XMP (L-Gln route): step 1/1. Functionally, catalyzes the synthesis of GMP from XMP. The sequence is that of GMP synthase [glutamine-hydrolyzing] from Ralstonia nicotianae (strain ATCC BAA-1114 / GMI1000) (Ralstonia solanacearum).